A 152-amino-acid polypeptide reads, in one-letter code: Flagellar assembly factor FliW (152 aa).

It belongs to the FliW family. Interacts with translational regulator CsrA and flagellin(s).

It localises to the cytoplasm. Functionally, acts as an anti-CsrA protein, binds CsrA and prevents it from repressing translation of its target genes, one of which is flagellin. Binds to flagellin and participates in the assembly of the flagellum. The polypeptide is Flagellar assembly factor FliW (Caldicellulosiruptor saccharolyticus (strain ATCC 43494 / DSM 8903 / Tp8T 6331)).